Consider the following 282-residue polypeptide: Pantothenate synthetase (282 aa).

Residue 26 to 33 (MGNLHDGH) participates in ATP binding. Histidine 33 (proton donor) is an active-site residue. Glutamine 57 is a (R)-pantoate binding site. Beta-alanine is bound at residue glutamine 57. 148-151 (GKKD) is an ATP binding site. Residue glutamine 154 participates in (R)-pantoate binding. 185-188 (LSSR) provides a ligand contact to ATP.

The protein belongs to the pantothenate synthetase family. In terms of assembly, homodimer.

The protein resides in the cytoplasm. It carries out the reaction (R)-pantoate + beta-alanine + ATP = (R)-pantothenate + AMP + diphosphate + H(+). It functions in the pathway cofactor biosynthesis; (R)-pantothenate biosynthesis; (R)-pantothenate from (R)-pantoate and beta-alanine: step 1/1. Functionally, catalyzes the condensation of pantoate with beta-alanine in an ATP-dependent reaction via a pantoyl-adenylate intermediate. The chain is Pantothenate synthetase from Polaromonas sp. (strain JS666 / ATCC BAA-500).